The sequence spans 381 residues: Arogenate dehydratase/prephenate dehydratase 2, chloroplastic (381 aa).

Residues 1 to 32 form a disordered region; it reads MAMHTVRLSPATQLHGGISSNLSPPNRKPNNS. The transit peptide at 1 to 66 directs the protein to the chloroplast; the sequence is MAMHTVRLSP…DANGRDNSVR (66 aa). Positions 18 to 32 are enriched in polar residues; sequence ISSNLSPPNRKPNNS. Residues 100–275 form the Prephenate dehydratase domain; it reads RVAYQGVRGA…NVTRFLMLAR (176 aa). Residues 289–375 enclose the ACT domain; sequence SIVFSLEEGP…TFLRVLGSYP (87 aa).

Expressed in roots, leaves, stems, flowers and siliques. Most abundant in leaves and seeds.

Its subcellular location is the plastid. It is found in the chloroplast stroma. It catalyses the reaction L-arogenate + H(+) = L-phenylalanine + CO2 + H2O. The enzyme catalyses prephenate + H(+) = 3-phenylpyruvate + CO2 + H2O. Its pathway is amino-acid biosynthesis; L-phenylalanine biosynthesis; L-phenylalanine from L-arogenate: step 1/1. The protein operates within amino-acid biosynthesis; L-phenylalanine biosynthesis; phenylpyruvate from prephenate: step 1/1. Converts the prephenate produced from the shikimate-chorismate pathway into phenylalanine. Dehydratase that uses arogenate and prephenate as substrates. Utilzes more efficiently arogenate than prephenate. Required for chloroplast division prior to ARC5, but in an ARC3- and ARC6-dependent manner, especially involved in the Z-ring formation. The protein is Arogenate dehydratase/prephenate dehydratase 2, chloroplastic of Arabidopsis thaliana (Mouse-ear cress).